The sequence spans 103 residues: Large ribosomal subunit protein uL24 (103 aa).

This sequence belongs to the universal ribosomal protein uL24 family. Part of the 50S ribosomal subunit.

Its function is as follows. One of two assembly initiator proteins, it binds directly to the 5'-end of the 23S rRNA, where it nucleates assembly of the 50S subunit. One of the proteins that surrounds the polypeptide exit tunnel on the outside of the subunit. The chain is Large ribosomal subunit protein uL24 from Rhizobium meliloti (strain 1021) (Ensifer meliloti).